Consider the following 143-residue polypeptide: Potassium voltage-gated channel subfamily E regulatory beta subunit 5 (143 aa).

N-linked (GlcNAc...) asparagine glycosylation is found at N2 and N25. A helical transmembrane segment spans residues 61–81; that stretch reads LYILLIMIFYACLAGGLILAY. Residues 82–143 are Cytoplasmic-facing; the sequence is TRSRKLVEAK…PALAQGAERV (62 aa).

It belongs to the potassium channel KCNE family. In terms of assembly, interacts with KCNQ1; impairs KCNQ1 localization in lipid rafts and only conducts current upon strong and continued depolarization. In terms of tissue distribution, detected in embryonal dorsal root and nerve ganglia, in the somites and in myoepicardial layer of the developing heart wall. Detected at lower levels in the central nervous system (CNS) and in developing limb.

It localises to the membrane. In terms of biological role, potassium channel ancillary subunit that is essential for generation of some native K(+) currents by virtue of formation of heteromeric ion channel complex with voltage-gated potassium (Kv) channel pore-forming alpha subunits. Functions as an inhibitory beta-subunit of the repolarizing cardiac potassium ion channel KCNQ1. This Mus musculus (Mouse) protein is Potassium voltage-gated channel subfamily E regulatory beta subunit 5 (Kcne5).